The primary structure comprises 173 residues: Lens fiber membrane intrinsic protein (173 aa).

Residues 1-3 (MYS) lie on the Cytoplasmic side of the membrane. A helical membrane pass occupies residues 4–24 (FMGGGLFCAWVGTILLVVATA). Over 25–66 (TDHWMQYRLSGSFAHQGLWRYCLGNKCFLQTESIAYWNATRA) the chain is Extracellular. C-linked (Man) tryptophan glycans are attached at residues Trp43 and Trp61. Residue Asn62 is glycosylated (N-linked (GlcNAc...) asparagine). Residues 67–87 (FMILSALCATSGIIMGVLAFA) traverse the membrane as a helical segment. Residues 88-98 (QQSTFTRLSRP) are Cytoplasmic-facing. The chain crosses the membrane as a helical span at residues 99–119 (FSAGIMFFASTLFVLLALAIY). The Extracellular portion of the chain corresponds to 120 to 140 (TGVTVSFLGRRFGDWRFSWSY). A helical transmembrane segment spans residues 141-161 (ILGWVALLMTFFAGIFYMCAY). Residues 162–173 (RMHECRRLATPR) are Cytoplasmic-facing. At Thr171 the chain carries Phosphothreonine.

It belongs to the PMP-22/EMP/MP20 family. In terms of assembly, seems to be associated with itself or another lens membrane component via disulfide bonds.

The protein resides in the membrane. In terms of biological role, present in the thicker 16-17 nm junctions of mammalian lens fiber cells, where it may contribute to cell junctional organization. Acts as a receptor for calmodulin. May play an important role in both lens development and cataractogenesis. This chain is Lens fiber membrane intrinsic protein (Lim2), found in Mus musculus (Mouse).